A 59-amino-acid chain; its full sequence is UPF0391 membrane protein lpg2521 (59 aa).

2 helical membrane passes run 5–25 (ALIF…GIAV) and 30–50 (IAKI…IMGL).

It belongs to the UPF0391 family.

The protein resides in the cell membrane. This chain is UPF0391 membrane protein lpg2521, found in Legionella pneumophila subsp. pneumophila (strain Philadelphia 1 / ATCC 33152 / DSM 7513).